Reading from the N-terminus, the 504-residue chain is uncharacterized protein (504 aa).

Transmembrane regions (helical) follow at residues 146–166, 196–216, and 330–350; these read TSAG…INIA, SSAA…ADVL, and SMAL…VAVA. Position 372-492 (372-492) interacts with a nucleoside 3',5'-cyclic phosphate; it reads FLNIDVPLQA…EIAYGVARTR (121 aa).

The protein localises to the cell membrane. This is an uncharacterized protein from Mycobacterium tuberculosis (strain CDC 1551 / Oshkosh).